An 894-amino-acid polypeptide reads, in one-letter code: Glutamate receptor 3 (894 aa).

Residues 1 to 28 form the signal peptide; sequence MARQKKMGQSVLRAVFFLVLGLLGHSHG. Residues 29–552 are Extracellular-facing; that stretch reads GFPNTISIGG…GVFSFLDPLA (524 aa). Residues Asn-63, Asn-266, Asn-380, Asn-415, and Asn-422 are each glycosylated (N-linked (GlcNAc...) asparagine). A disulfide bond links Cys-91 and Cys-340. The L-glutamate site is built by Pro-508, Thr-510, and Arg-515. A helical transmembrane segment spans residues 553–573; sequence YEIWMCIVFAYIGVSVVLFLV. Residues 574–602 are Cytoplasmic-facing; the sequence is SRFSPYEWHLEDNNEEPRDPQSPPDPPNE. The segment at residues 603-618 is an intramembrane region (helical; Pore-forming); it reads FGIFNSLWFSLGAFMQ. The stretch at 619-621 is an intramembrane region; that stretch reads QGC. Cys-621 is lipidated: S-palmitoyl cysteine. The Cytoplasmic segment spans residues 622–627; that stretch reads DISPRS. A helical membrane pass occupies residues 628 to 648; that stretch reads LSGRIVGGVWWFFTLIIISSY. Topologically, residues 649–823 are extracellular; it reads TANLAAFLTV…DKTSALSLSN (175 aa). Ser-686, Thr-687, and Glu-737 together coordinate L-glutamate. An intrachain disulfide couples Cys-750 to Cys-805. The helical transmembrane segment at 824–844 threads the bilayer; that stretch reads VAGVFYILVGGLGLAMMVALI. The Cytoplasmic segment spans residues 845–894; the sequence is EFCYKSRAESKRMKLTKNTQNFKPAPATNTQNYATYREGYNVYGTESVKI. Cys-847 carries the S-palmitoyl cysteine lipid modification. Tyr-877 and Tyr-887 each carry phosphotyrosine.

Belongs to the glutamate-gated ion channel (TC 1.A.10.1) family. GRIA3 subfamily. In terms of assembly, homotetramer or heterotetramer of pore-forming glutamate receptor subunits. Tetramers may be formed by the dimerization of dimers. Interacts with PICK1, GRIP1 and GRIP2. Found in a complex with GRIA1, GRIA2, GRIA4, CNIH2, CNIH3, CACNG2, CACNG3, CACNG4, CACNG5, CACNG7 and CACNG8. Interacts with CACNG5. Found in a complex with GRIA1, GRIA2, GRIA4, DLG4, CACNG8 and CNIH2.

The protein localises to the cell membrane. It is found in the postsynaptic cell membrane. Its subcellular location is the postsynaptic density membrane. The enzyme catalyses Ca(2+)(in) = Ca(2+)(out). Its function is as follows. Ionotropic glutamate receptor that functions as a ligand-gated cation channel, gated by L-glutamate and glutamatergic agonists such as alpha-amino-3-hydroxy-5-methyl-4-isoxazolepropionic acid (AMPA), quisqualic acid, and kainic acid. L-glutamate acts as an excitatory neurotransmitter at many synapses in the central nervous system and plays an important role in fast excitatory synaptic transmission by inducing long-term potentiation. Binding of the excitatory neurotransmitter L-glutamate induces a conformation change, leading to the opening of the cation channel, and thereby converts the chemical signal to an electrical impulse upon entry of calcium. The receptor then desensitizes rapidly and enters a transient inactive state, characterized by the presence of bound agonist. In the presence of CACNG8, shows resensitization which is characterized by a delayed accumulation of current flux upon continued application of glutamate. This is Glutamate receptor 3 from Homo sapiens (Human).